The primary structure comprises 288 residues: Pantothenate synthetase (288 aa).

Met-30–His-37 provides a ligand contact to ATP. The Proton donor role is filled by His-37. Gln-61 provides a ligand contact to (R)-pantoate. Beta-alanine is bound at residue Gln-61. Residue Gly-147 to Asp-150 coordinates ATP. Gln-153 contributes to the (R)-pantoate binding site. Residue Lys-184 to Arg-187 participates in ATP binding.

This sequence belongs to the pantothenate synthetase family. As to quaternary structure, homodimer.

The protein localises to the cytoplasm. The catalysed reaction is (R)-pantoate + beta-alanine + ATP = (R)-pantothenate + AMP + diphosphate + H(+). The protein operates within cofactor biosynthesis; (R)-pantothenate biosynthesis; (R)-pantothenate from (R)-pantoate and beta-alanine: step 1/1. Catalyzes the condensation of pantoate with beta-alanine in an ATP-dependent reaction via a pantoyl-adenylate intermediate. The polypeptide is Pantothenate synthetase (Bacillus licheniformis (strain ATCC 14580 / DSM 13 / JCM 2505 / CCUG 7422 / NBRC 12200 / NCIMB 9375 / NCTC 10341 / NRRL NRS-1264 / Gibson 46)).